Consider the following 209-residue polypeptide: Methylated-DNA--protein-cysteine methyltransferase (209 aa).

A Zn(2+)-binding site is contributed by C5. S14 is subject to Phosphoserine. Residues C24 and H29 each coordinate Zn(2+). Residues 35–57 (SGKTPSSDPKEAPASPELLGGPE) are disordered. H89 is a Zn(2+) binding site. 5 residues coordinate DNA: T99, Y118, Q119, N127, and R132. C149 (nucleophile; methyl group acceptor) is an active-site residue. S155 is a DNA binding site. Position 205 is a phosphoserine (S205).

It belongs to the MGMT family. Zn(2+) serves as cofactor.

It is found in the nucleus. The catalysed reaction is a 6-O-methyl-2'-deoxyguanosine in DNA + L-cysteinyl-[protein] = S-methyl-L-cysteinyl-[protein] + a 2'-deoxyguanosine in DNA. It catalyses the reaction a 4-O-methyl-thymidine in DNA + L-cysteinyl-[protein] = a thymidine in DNA + S-methyl-L-cysteinyl-[protein]. Involved in the cellular defense against the biological effects of O6-methylguanine (O6-MeG) and O4-methylthymine (O4-MeT) in DNA. Repairs the methylated nucleobase in DNA by stoichiometrically transferring the methyl group to a cysteine residue in the enzyme. This is a suicide reaction: the enzyme is irreversibly inactivated. The polypeptide is Methylated-DNA--protein-cysteine methyltransferase (MGMT) (Cricetulus griseus (Chinese hamster)).